Consider the following 304-residue polypeptide: Putative S-adenosyl-L-methionine-dependent methyltransferase MAV_4236 (304 aa).

S-adenosyl-L-methionine contacts are provided by residues D129 and 158–159 (DL).

Belongs to the UPF0677 family.

Exhibits S-adenosyl-L-methionine-dependent methyltransferase activity. This chain is Putative S-adenosyl-L-methionine-dependent methyltransferase MAV_4236, found in Mycobacterium avium (strain 104).